Here is a 391-residue protein sequence, read N- to C-terminus: Period circadian protein (391 aa).

Disordered regions lie at residues 27 to 121, 163 to 188, 241 to 270, and 328 to 357; these read VTAP…PPVT, MLEY…WEGE, GSSA…QFTQ, and SPSG…TSQA. The span at 93–114 shows a compositional bias: gly residues; the sequence is GTSGTGNSGDGGGGGGADGPGS. The span at 241-255 shows a compositional bias: gly residues; that stretch reads GSSAGGNGSGTGNNN.

As to quaternary structure, forms a heterodimer with timeless (TIM); the complex then translocates into the nucleus. In terms of processing, phosphorylated with a circadian rhythmicity, probably by the double-time protein (dbt). Phosphorylation could be implicated in the stability of per monomer and in the formation of heterodimer per-tim.

Its subcellular location is the nucleus. The protein resides in the cytoplasm. It localises to the perinuclear region. Essential for biological clock functions. Determines the period length of circadian and ultradian rhythms; an increase in PER dosage leads to shortened circadian rhythms and a decrease leads to lengthened circadian rhythms. Essential for the circadian rhythmicity of locomotor activity, eclosion behavior, and for the rhythmic component of the male courtship song that originates in the thoracic nervous system. The biological cycle depends on the rhythmic formation and nuclear localization of the TIM-PER complex. Light induces the degradation of TIM, which promotes elimination of PER. Nuclear activity of the heterodimer coordinatively regulates PER and TIM transcription through a negative feedback loop. Behaves as a negative element in circadian transcriptional loop. Does not appear to bind DNA, suggesting indirect transcriptional inhibition. This Drosophila insularis (Fruit fly) protein is Period circadian protein (per).